Reading from the N-terminus, the 225-residue chain is MAEEPTYTTEQVDELIHAGLGTVDFFLSRPIDAQSSLGKGSIPPGVTAVLTSAAETKSKPVAAGPVKPRRKKVISNTTPYTIADNIPPEKLPINTPIPNPLLPLARPHGKMTDIDIVTGNITEGSYKGVELAKLGKQTLLTRFTSNEPVSSAGSAQDPNFKRGGANRERARGNHRREWSIAWVGDQVKVFEWCNPRCAPVTASARKFTCTCGSCPSICGECEGDH.

The span at 145–157 shows a compositional bias: polar residues; that stretch reads SNEPVSSAGSAQD. Residues 145 to 173 are disordered; that stretch reads SNEPVSSAGSAQDPNFKRGGANRERARGN. Residues His-174, Cys-193, Cys-197, Cys-209, Cys-211, Cys-214, Cys-218, and Cys-221 each coordinate Zn(2+).

This sequence belongs to the paramyxoviruses V protein family. Interacts with host IFIH1/MDA5 and DHX58/LGP2. Forms with host DDB1, CUL4A, STAT1 and STAT2 the HPIV2 virus V-dependent complex (VDC); this complex targets host STAT2 to proteasomal degradation.

Its subcellular location is the host nucleus. Plays an essential role in the inhibition of host immune response. Prevents the establishment of cellular antiviral state by blocking interferon-alpha/beta (IFN-alpha/beta) production and signaling pathway. Interacts with host IFIH1/MDA5 and DHX58/LGP2 to inhibit the transduction pathway involved in the activation of IFN-beta promoter, thus protecting the virus against cell antiviral state. Efficiently blocks type I IFN signaling following infection by targeting host STAT2 for proteasomal degradation. Also plays a role in viral growth by promoting host RhoA-induced F-actin formation. The chain is Non-structural protein V (P/V) from Homo sapiens (Human).